A 397-amino-acid polypeptide reads, in one-letter code: Succinyl-diaminopimelate desuccinylase (397 aa).

Residue H73 participates in Zn(2+) binding. The active site involves D75. Position 106 (D106) interacts with Zn(2+). E140 (proton acceptor) is an active-site residue. Zn(2+) contacts are provided by E141, E169, and H366.

It belongs to the peptidase M20A family. DapE subfamily. Homodimer. It depends on Zn(2+) as a cofactor. The cofactor is Co(2+).

It catalyses the reaction N-succinyl-(2S,6S)-2,6-diaminopimelate + H2O = (2S,6S)-2,6-diaminopimelate + succinate. The protein operates within amino-acid biosynthesis; L-lysine biosynthesis via DAP pathway; LL-2,6-diaminopimelate from (S)-tetrahydrodipicolinate (succinylase route): step 3/3. In terms of biological role, catalyzes the hydrolysis of N-succinyl-L,L-diaminopimelic acid (SDAP), forming succinate and LL-2,6-diaminopimelate (DAP), an intermediate involved in the bacterial biosynthesis of lysine and meso-diaminopimelic acid, an essential component of bacterial cell walls. The chain is Succinyl-diaminopimelate desuccinylase from Rhizobium rhizogenes (strain K84 / ATCC BAA-868) (Agrobacterium radiobacter).